The following is a 135-amino-acid chain: Transcriptional activator protein (135 aa).

Positions 17-32 match the Nuclear localization signal motif; the sequence is KVQHRAAKRKRIRRKR. Residues 37-54 fold into a zinc finger; the sequence is CGCSYYVHINCHNHGFTH. A disordered region spans residues 77-115; the sequence is LFQDHSTRQQTVRNEPGHNNRPDTVQPQPEESVGTTSML. The segment covering 98–114 has biased composition (polar residues); it reads PDTVQPQPEESVGTTSM. The transactivation stretch occupies residues 120-135; sequence GLDDLTASDLAFLEGI.

This sequence belongs to the geminiviridae transcriptional activator protein family. Monomer. Homodimer. Homooligomer. Self-interaction correlates with nuclear localization and efficient activation of transcription. Monomers suppress local silencing by interacting with and inactivating host adenosine kinase 2 (ADK2) in the cytoplasm. Interacts with and inhibits host SNF1 kinase. Binds to ssDNA. Post-translationally, phosphorylated.

The protein localises to the host nucleus. Its subcellular location is the host cytoplasm. In terms of biological role, strong activator of the late viral genes promoters. Enhances the expression of the capsid protein and nuclear shuttle protein. Acts as a suppressor of RNA-mediated gene silencing, also known as post-transcriptional gene silencing (PTGS), a mechanism of plant viral defense that limits the accumulation of viral RNAs. Suppresses the host RNA silencing by inhibiting adenosine kinase 2 (ADK2), a kinase involved in a general methylation pathway. Also suppresses the host basal defense by interacting with and inhibiting SNF1 kinase, a key regulator of cell metabolism implicated in innate antiviral defense. Determines pathogenicity. The protein is Transcriptional activator protein of Indian cassava mosaic virus (ICMV).